We begin with the raw amino-acid sequence, 636 residues long: 1-deoxy-D-xylulose-5-phosphate synthase (636 aa).

Thiamine diphosphate-binding positions include His72 and 113–115; that span reads GHA. Asp144 contacts Mg(2+). Thiamine diphosphate contacts are provided by residues 145 to 146, Asn174, Tyr287, and Glu370; that span reads GS. Residue Asn174 participates in Mg(2+) binding.

The protein belongs to the transketolase family. DXPS subfamily. Homodimer. It depends on Mg(2+) as a cofactor. Requires thiamine diphosphate as cofactor.

The enzyme catalyses D-glyceraldehyde 3-phosphate + pyruvate + H(+) = 1-deoxy-D-xylulose 5-phosphate + CO2. Its pathway is metabolic intermediate biosynthesis; 1-deoxy-D-xylulose 5-phosphate biosynthesis; 1-deoxy-D-xylulose 5-phosphate from D-glyceraldehyde 3-phosphate and pyruvate: step 1/1. Its function is as follows. Catalyzes the acyloin condensation reaction between C atoms 2 and 3 of pyruvate and glyceraldehyde 3-phosphate to yield 1-deoxy-D-xylulose-5-phosphate (DXP). The polypeptide is 1-deoxy-D-xylulose-5-phosphate synthase (Synechococcus elongatus (strain ATCC 33912 / PCC 7942 / FACHB-805) (Anacystis nidulans R2)).